A 249-amino-acid chain; its full sequence is Homeobox protein TGIF2LX (249 aa).

Basic and acidic residues predominate over residues 1–27 (MEAAADRPAETRSRVEKDSRRAKKDSP). Disordered regions lie at residues 1–60 (MEAA…KKKR) and 121–215 (QRRG…EPVS). The segment covering 28–46 (AKTQSPAQDTSIMLRSNAD) has biased composition (polar residues). A DNA-binding region (homeobox; TALE-type) is located at residues 55–118 (EHKKKRKGYL…INARRRILPD (64 aa)). The span at 159 to 172 (DNVQSLPLRSSPKG) shows a compositional bias: polar residues. The span at 202–215 (VSNITSSSSPEPVS) shows a compositional bias: low complexity.

The protein belongs to the TALE/TGIF homeobox family.

It localises to the nucleus. Its function is as follows. May have a transcription role in testis. This chain is Homeobox protein TGIF2LX (TGIF2LX), found in Miopithecus talapoin (Angolan talapoin).